The following is a 148-amino-acid chain: Glutamyl-tRNA(Gln) amidotransferase subunit C, mitochondrial (148 aa).

The transit peptide at 1–10 (MLRLLNKRFY) directs the protein to the mitochondrion.

It belongs to the GatC family. In terms of assembly, subunit of the heterotrimeric GatCAB amidotransferase (AdT) complex, composed of A, B and C subunits.

It is found in the mitochondrion. It carries out the reaction L-glutamyl-tRNA(Gln) + L-glutamine + ATP + H2O = L-glutaminyl-tRNA(Gln) + L-glutamate + ADP + phosphate + H(+). Its function is as follows. Allows the formation of correctly charged Gln-tRNA(Gln) through the transamidation of misacylated Glu-tRNA(Gln) in the mitochondria. The reaction takes place in the presence of glutamine and ATP through an activated gamma-phospho-Glu-tRNA(Gln). The sequence is that of Glutamyl-tRNA(Gln) amidotransferase subunit C, mitochondrial from Drosophila ananassae (Fruit fly).